Consider the following 110-residue polypeptide: Large ribosomal subunit protein uL22 (110 aa).

It belongs to the universal ribosomal protein uL22 family. In terms of assembly, part of the 50S ribosomal subunit.

Functionally, this protein binds specifically to 23S rRNA; its binding is stimulated by other ribosomal proteins, e.g. L4, L17, and L20. It is important during the early stages of 50S assembly. It makes multiple contacts with different domains of the 23S rRNA in the assembled 50S subunit and ribosome. In terms of biological role, the globular domain of the protein is located near the polypeptide exit tunnel on the outside of the subunit, while an extended beta-hairpin is found that lines the wall of the exit tunnel in the center of the 70S ribosome. This Photobacterium profundum (strain SS9) protein is Large ribosomal subunit protein uL22.